We begin with the raw amino-acid sequence, 476 residues long: Zinc transporter SLC39A7 (476 aa).

A helical transmembrane segment spans residues 7-27 (APHWVAVGLLTWAALGLLVAG). Positions 35 to 109 (HKDVEEDFHG…SHGHSHDSLH (75 aa)) are enriched in basic and acidic residues. The disordered stretch occupies residues 35–131 (HKDVEEDFHG…HGTSREAGAP (97 aa)). His-73 is subject to Pros-methylhistidine. A compositionally biased stretch (basic residues) spans 110–120 (HGGHGHAHREH). Transmembrane regions (helical) follow at residues 146 to 166 (ALGATVLISAAPFFVLFLIPV), 177 to 197 (LQILLSFASGGLLGDAFLHLI), and 222 to 242 (GPILSVGLWVLSGIVAFLVVE). A disordered region spans residues 249–320 (KGGHGHSHGH…QSPEEEKAGS (72 aa)). A compositionally biased stretch (basic and acidic residues) spans 257–292 (GHGDRHAHGDSHTHGDRHECSSKEKPSTEEEKEVGG). Ser-283 carries the phosphoserine modification. A run of 2 helical transmembrane segments spans residues 393–413 (VTAIGALAGTACALLTEGGAV) and 417–437 (VAGGAGPGWVLPFTAGGFIYV).

Belongs to the ZIP transporter (TC 2.A.5) family. KE4/Catsup subfamily. As to quaternary structure, homodimer. In terms of processing, methylation at some His residue by METTL9 leads to reduced zinc-binding. Rapidly phosphorylated by CK2 following Zn(2+) treatment. This phosphorylation is required for efficient cytosolic Zn(2+) release. Widely expressed. Highly expressed in the intestinal crypts.

Its subcellular location is the endoplasmic reticulum membrane. The protein resides in the golgi apparatus. The protein localises to the cis-Golgi network membrane. The catalysed reaction is Zn(2+)(in) = Zn(2+)(out). Functionally, transports Zn(2+) from the endoplasmic reticulum (ER)/Golgi apparatus to the cytosol, playing an essential role in the regulation of cytosolic zinc levels. Acts as a gatekeeper of zinc release from intracellular stores, requiring post-translational activation by phosphorylation, resulting in activation of multiple downstream pathways leading to cell growth and proliferation. Has an essential role in B cell development and is required for proper B cell receptor signaling. Plays an important role in maintaining intestinal epithelial homeostasis and skin dermis development by regulating ER function. Controls cell signaling pathways involved in glucose metabolism in skeletal muscle. Has a protective role against ER stress in different biological contexts. Mediates Zn(2+)-induced ferroptosis. The protein is Zinc transporter SLC39A7 (Slc39a7) of Mus musculus (Mouse).